The following is a 204-amino-acid chain: Large ribosomal subunit protein uL18 (204 aa).

It belongs to the universal ribosomal protein uL18 family. In terms of assembly, part of the 50S ribosomal subunit. Contacts the 5S and 23S rRNAs.

In terms of biological role, this is one of the proteins that bind and probably mediate the attachment of the 5S RNA into the large ribosomal subunit, where it forms part of the central protuberance. This Ignicoccus hospitalis (strain KIN4/I / DSM 18386 / JCM 14125) protein is Large ribosomal subunit protein uL18.